The sequence spans 753 residues: 5-methyltetrahydropteroyltriglutamate--homocysteine methyltransferase (753 aa).

Residues 17 to 20 (RELK) and K117 each bind 5-methyltetrahydropteroyltri-L-glutamate. L-homocysteine contacts are provided by residues 431 to 433 (IGS) and E484. Residues 431 to 433 (IGS) and E484 contribute to the L-methionine site. 5-methyltetrahydropteroyltri-L-glutamate-binding positions include 515 to 516 (RC) and W561. Position 599 (D599) interacts with L-homocysteine. D599 is an L-methionine binding site. A 5-methyltetrahydropteroyltri-L-glutamate-binding site is contributed by E605. Residues H641, C643, and E665 each contribute to the Zn(2+) site. Residue H694 is the Proton donor of the active site. C726 contacts Zn(2+).

The protein belongs to the vitamin-B12 independent methionine synthase family. Zn(2+) is required as a cofactor.

It catalyses the reaction 5-methyltetrahydropteroyltri-L-glutamate + L-homocysteine = tetrahydropteroyltri-L-glutamate + L-methionine. It participates in amino-acid biosynthesis; L-methionine biosynthesis via de novo pathway; L-methionine from L-homocysteine (MetE route): step 1/1. Functionally, catalyzes the transfer of a methyl group from 5-methyltetrahydrofolate to homocysteine resulting in methionine formation. The chain is 5-methyltetrahydropteroyltriglutamate--homocysteine methyltransferase from Escherichia coli (strain ATCC 8739 / DSM 1576 / NBRC 3972 / NCIMB 8545 / WDCM 00012 / Crooks).